Consider the following 568-residue polypeptide: PTS system lactose-specific EIICB component (568 aa).

Residues 8–409 (IEKGKPFFEK…LVDTVIYYPF (402 aa)) form the PTS EIIC type-3 domain. A run of 10 helical transmembrane segments spans residues 30-50 (GFIS…IAYV), 65-85 (MLMT…AGTT), 103-123 (INFI…AADP), 128-148 (GFLS…AAFI), 183-203 (FAFS…VIGV), 222-242 (GYLG…VGIH), 246-266 (IVEP…AHLI), 283-303 (FIVT…FMWL), 339-359 (VFFI…KFFV), and 381-401 (IVLG…LILV). The PTS EIIB type-3 domain occupies 465–568 (ETNVLVLCAG…LAFVEEQFKD (104 aa)). Cys-472 (phosphocysteine intermediate; for EIIB activity) is an active-site residue. Position 472 is a phosphocysteine; by EIIA (Cys-472).

The protein localises to the cell membrane. It carries out the reaction lactose(out) + N(pros)-phospho-L-histidyl-[protein] = lactose 6-phosphate(in) + L-histidyl-[protein]. Its function is as follows. The phosphoenolpyruvate-dependent sugar phosphotransferase system (sugar PTS), a major carbohydrate active transport system, catalyzes the phosphorylation of incoming sugar substrates concomitantly with their translocation across the cell membrane. The enzyme II LacEF PTS system is involved in lactose transport. The protein is PTS system lactose-specific EIICB component of Streptococcus mutans serotype c (strain ATCC 700610 / UA159).